The chain runs to 474 residues: Cbb3-type cytochrome c oxidase subunit CcoN1 (474 aa).

Residues 1–16 (MNTATSTAYSYKVVRQ) lie on the Cytoplasmic side of the membrane. Residues 17–37 (FAIMTVVWGIVGMGLGVFIAA) form a helical membrane-spanning segment. The Periplasmic portion of the chain corresponds to 38–60 (QLAWPFLNFDLPWTSFGRLRPLH). Position 60 (H60) interacts with heme b. The helical transmembrane segment at 61-81 (TNAVIFAFGGCALFATSYYSV) threads the bilayer. Topologically, residues 82 to 96 (QRTCQTTLFAPKLAA) are cytoplasmic. A helical transmembrane segment spans residues 97–117 (FTFWGWQLVILLAAISLPLGF). Topologically, residues 118 to 129 (TSSKEYAELEWP) are periplasmic. The chain crosses the membrane as a helical span at residues 130–150 (IDILITIVWVAYAVVFFGTLA). Residues 151 to 156 (KRKVKH) are Cytoplasmic-facing. Residues 157 to 177 (IYVGNWFFGAFILTVAILHVV) form a helical membrane-spanning segment. Over 178–205 (NNLEIPVTAMKSYSLYAGATDAMVQWWY) the chain is Periplasmic. Residues 206 to 226 (GHNAVGFFLTAGFLGIMYYFV) traverse the membrane as a helical segment. H207 provides a ligand contact to Cu cation. Residues 227–238 (PKQAERPVYSYR) lie on the Cytoplasmic side of the membrane. Residues 239-259 (LSIVHFWALITVYIWAGPHHL) form a helical membrane-spanning segment. Residues H257 and H258 each coordinate Cu cation. Over 260–270 (HYTALPDWAQS) the chain is Periplasmic. A helical membrane pass occupies residues 271–291 (LGMVMSLILLAPSWGGMINGM). At 292–308 (MTLSGAWHKLRSDPILR) the chain is on the cytoplasmic side. The chain crosses the membrane as a helical span at residues 309–329 (FLVVSLAFYGMSTFEGPMMAI). Over 330 to 345 (KTVNALSHYTDWTIGH) the chain is Periplasmic. Heme b is bound by residues H345 and H347. A helical transmembrane segment spans residues 346-366 (VHAGALGWVAMVSIGALYHLV). The Cytoplasmic segment spans residues 367–384 (PKVFGREQMHSIGLINTH). A helical membrane pass occupies residues 385–405 (FWLATIGTVLYIASMWVNGIA). Topologically, residues 406–432 (QGLMWRAINDDGTLTYSFVESLEASHP) are periplasmic. A helical transmembrane segment spans residues 433–453 (GFVVRMIGGAIFFAGMLVMAY). The Cytoplasmic segment spans residues 454-474 (NTWRTVQAAKPAEYDAAAQIA).

Belongs to the heme-copper respiratory oxidase family. In terms of assembly, component of the cbb3-type cytochrome c oxidase at least composed of CcoN, CcoO, CcoQ and CcoP. The cofactor is Cu(2+). Requires heme b as cofactor.

Its subcellular location is the cell inner membrane. The catalysed reaction is 4 Fe(II)-[cytochrome c] + O2 + 8 H(+)(in) = 4 Fe(III)-[cytochrome c] + 2 H2O + 4 H(+)(out). It functions in the pathway energy metabolism; oxidative phosphorylation. In terms of biological role, cbb3-type cytochrome c oxidase is the component of the respiratory chain that catalyzes the reduction of oxygen to water. Subunits CcoN and CcoO form the functional core of the enzyme complex. Subunits CcoP and CcoQ may optionally bind to the core. CcoN is the catalytic subunit of the enzyme. Electrons originating in cytochrome c or a quinol are transferred to the bimetallic center formed by a high-spin heme and copper B. The complex also functions as a proton pump. This Stutzerimonas stutzeri (Pseudomonas stutzeri) protein is Cbb3-type cytochrome c oxidase subunit CcoN1.